The following is a 225-amino-acid chain: 2-C-methyl-D-erythritol 4-phosphate cytidylyltransferase (225 aa).

The protein belongs to the IspD/TarI cytidylyltransferase family. IspD subfamily.

The enzyme catalyses 2-C-methyl-D-erythritol 4-phosphate + CTP + H(+) = 4-CDP-2-C-methyl-D-erythritol + diphosphate. The protein operates within isoprenoid biosynthesis; isopentenyl diphosphate biosynthesis via DXP pathway; isopentenyl diphosphate from 1-deoxy-D-xylulose 5-phosphate: step 2/6. In terms of biological role, catalyzes the formation of 4-diphosphocytidyl-2-C-methyl-D-erythritol from CTP and 2-C-methyl-D-erythritol 4-phosphate (MEP). The sequence is that of 2-C-methyl-D-erythritol 4-phosphate cytidylyltransferase from Haemophilus influenzae (strain PittGG).